A 630-amino-acid chain; its full sequence is Sodium-dependent serotonin transporter (630 aa).

2 stretches are compositionally biased toward polar residues: residues 1–11 (METTPLNSQKV) and 42–55 (QISN…STSA). The disordered stretch occupies residues 1–63 (METTPLNSQK…SAGDEAPHST (63 aa)). The Cytoplasmic segment spans residues 1-87 (METTPLNSQK…ERETWGKKMD (87 aa)). Tyr-47 is subject to Phosphotyrosine. A helical transmembrane segment spans residues 88–112 (FLLSVIGYAVDLGNIWRFPYICYQN). The Na(+) site is built by Gly-94, Ala-96, Val-97, Asp-98, and Asn-101. Serotonin is bound at residue Asp-98. Residues 113 to 115 (GGG) lie on the Extracellular side of the membrane. The helical transmembrane segment at 116 to 135 (AFLLPYTIMAIFGGIPLFYM) threads the bilayer. The Cytoplasmic portion of the chain corresponds to 136-160 (ELALGQYHRNGCISIWKKICPIFKG). Tyr-142 is subject to Phosphotyrosine. Residues 161–186 (IGYAICIIAFYIASYYNTIIAWALYY) traverse the membrane as a helical segment. The Extracellular segment spans residues 187–252 (LISSFTDQLP…KGLQDLGTIS (66 aa)). The cysteines at positions 200 and 209 are disulfide-linked. 2 N-linked (GlcNAc...) asparagine glycosylation sites follow: Asn-208 and Asn-217. Residues 253–271 (WQLALCIMLIFTIIYFSIW) form a helical membrane-spanning segment. The Cytoplasmic segment spans residues 272-277 (KGVKTS). Phosphothreonine is present on Thr-276. A helical membrane pass occupies residues 278–297 (GKVVWVTATFPYIVLSVLLV). The Extracellular segment spans residues 298–324 (RGATLPGAWRGVVFYLKPNWQKLLETG). A helical membrane pass occupies residues 325–347 (VWVDAAAQIFFSLGPGFGVLLAF). Residue Ser-336 coordinates Na(+). Topologically, residues 348-360 (ASYNKFNNNCYQD) are cytoplasmic. The helical transmembrane segment at 361–380 (ALVTSVVNCMTSFVSGFVIF) threads the bilayer. Asn-368 provides a ligand contact to Na(+). Residues 381-421 (TVLGYMAEMRNEDVSEVAKDAGPSLLFITYAEAIANMPAST) lie on the Extracellular side of the membrane. A helical membrane pass occupies residues 422–443 (FFAIIFFLMLITLGLDSTFAGL). Residues Leu-434, Asp-437, and Ser-438 each coordinate Na(+). Thr-439 lines the serotonin pocket. Topologically, residues 444–463 (EGVITAVLDEFPHIWAKRRE) are cytoplasmic. A helical transmembrane segment spans residues 464 to 483 (WFVLIVVITCILGSLLTLTS). The Extracellular portion of the chain corresponds to 484–494 (GGAYVVTLLEE). Serotonin-binding residues include Glu-494 and Tyr-495. A helical transmembrane segment spans residues 495–516 (YATGPAVLTVALIEAVVVSWFY). The Cytoplasmic portion of the chain corresponds to 517–538 (GITQFCSDVKEMLGFSPGWFWR). Residues 539–558 (ICWVAISPLFLLFIICSFLM) form a helical membrane-spanning segment. Residues Phe-556 and Ser-559 each coordinate serotonin. Residues 559-574 (SPPQLRLFQYNYPHWS) are Extracellular-facing. Residues 575–595 (IILGYCIGTSSVICIPIYIIY) form a helical membrane-spanning segment. Topologically, residues 596–630 (RLISTPGTLKERIIKSITPETPTEIPCGDIRMNAV) are cytoplasmic. An interaction with RAB4A region spans residues 616–624 (TPTEIPCGD).

The protein belongs to the sodium:neurotransmitter symporter (SNF) (TC 2.A.22) family. SLC6A4 subfamily. In terms of assembly, monomer or homooligomer. Interacts (via C-terminus) with SCAMP2; the interaction is direct and retains transporter molecules intracellularly. Interacts with filamentous actin and STX1A. Interacts (via the N-terminus) with STX1A (via the H3 domain); this interaction regulates SLC4A6 channel conductance. Interacts with SEC23A, SEC24C and PATJ. Interacts with NOS1; the interaction may diminish the cell surface localization of SERT in the brain and, correspondingly, reduce serotonin reuptake. Interacts with TGFB1I1. Interacts with ITGAV:ITGB3. Interacts (via C-terminus) with ITGB3; this interaction regulates SLC6A4 trafficking. Post-translationally, phosphorylation at Thr-276 increases 5-HT uptake and is required for cGMP-mediated SERT regulation. As to expression, expressed in the lung, midbrain and brainstem regions. Expressed in brainstem raphe neurons.

Its subcellular location is the cell membrane. It is found in the endomembrane system. The protein resides in the endosome membrane. It localises to the synapse. The protein localises to the cell junction. Its subcellular location is the focal adhesion. It is found in the cell projection. The protein resides in the neuron projection. The catalysed reaction is serotonin(out) + K(+)(in) + Na(+)(out) + H(+)(in) = serotonin(in) + K(+)(out) + Na(+)(in) + H(+)(out). In terms of biological role, serotonin transporter that cotransports serotonin with one Na(+) ion in exchange for one K(+) ion and possibly one proton in an overall electroneutral transport cycle. Transports serotonin across the plasma membrane from the extracellular compartment to the cytosol thus limiting serotonin intercellular signaling. Essential for serotonin homeostasis in the central nervous system. In the developing somatosensory cortex, acts in glutamatergic neurons to control serotonin uptake and its trophic functions accounting for proper spatial organization of cortical neurons and elaboration of sensory circuits. In the mature cortex, acts primarily in brainstem raphe neurons to mediate serotonin uptake from the synaptic cleft back into the pre-synaptic terminal thus terminating serotonin signaling at the synapse. Modulates mucosal serotonin levels in the gastrointestinal tract through uptake and clearance of serotonin in enterocytes. Required for enteric neurogenesis and gastrointestinal reflexes. Regulates blood serotonin levels by ensuring rapid high affinity uptake of serotonin from plasma to platelets, where it is further stored in dense granules via vesicular monoamine transporters and then released upon stimulation. Mechanistically, the transport cycle starts with an outward-open conformation having Na1(+) and Cl(-) sites occupied. The binding of a second extracellular Na2(+) ion and serotonin substrate leads to structural changes to outward-occluded to inward-occluded to inward-open, where the Na2(+) ion and serotonin are released into the cytosol. Binding of intracellular K(+) ion induces conformational transitions to inward-occluded to outward-open and completes the cycle by releasing K(+) possibly together with a proton bound to Asp-98 into the extracellular compartment. Na1(+) and Cl(-) ions remain bound throughout the transport cycle. Additionally, displays serotonin-induced channel-like conductance for monovalent cations, mainly Na(+) ions. The channel activity is uncoupled from the transport cycle and may contribute to the membrane resting potential or excitability. This chain is Sodium-dependent serotonin transporter, found in Mus musculus (Mouse).